Here is a 1240-residue protein sequence, read N- to C-terminus: Phospholipid-transporting ATPase 6 (1240 aa).

Residues 1–75 (MARRRIRSRI…TTRYNLLTFL (75 aa)) lie on the Cytoplasmic side of the membrane. A helical membrane pass occupies residues 76–97 (PKCLYEQFHRVANFYFLVAAIL). Residues 98 to 101 (SVFP) are Extracellular-facing. Residues 102–124 (LSPFNKWSMIAPLVFVVGLSMGK) form a helical membrane-spanning segment. The Cytoplasmic portion of the chain corresponds to 125–306 (EALEDWRRFM…SRIEKRMDYI (182 aa)). The helical transmembrane segment at 307–328 (IYTLFALLLTVSFISSLGFAVM) threads the bilayer. The Extracellular segment spans residues 329–360 (TKLLMAEWWYLRPDKPESLTNPTNPLYAWVVH). The helical transmembrane segment at 361 to 378 (LITALLLYGYLIPISLYV) threads the bilayer. The Cytoplasmic segment spans residues 379–943 (SIEVVKVLQA…HGHWCYKRIA (565 aa)). Asp426 acts as the 4-aspartylphosphate intermediate in catalysis. Residue Lys625 forms a Glycyl lysine isopeptide (Lys-Gly) (interchain with G-Cter in ubiquitin) linkage. Asp888 and Asp892 together coordinate Mg(2+). Residues 944-963 (QMICYFFYKNITFGLTLFYF) traverse the membrane as a helical segment. Topologically, residues 964–977 (ECFTGFSGQSIYND) are extracellular. Residues 978–997 (SYLLLFNVVLTSLPVISLGV) traverse the membrane as a helical segment. Residues 998-1027 (FEQDVPSDVCLQFPALYQQGPKNLFFDWYR) lie on the Cytoplasmic side of the membrane. A helical membrane pass occupies residues 1028–1050 (ILGWMGNGVYASIVIFTLNLGIF). Residues 1051–1063 (HVQSFRSDGQTAD) are Extracellular-facing. Residues 1064-1086 (MNAMGTAMFTCIIWAVNVQIALT) traverse the membrane as a helical segment. At 1087 to 1092 (MSHFTW) the chain is on the cytoplasmic side. A helical membrane pass occupies residues 1093–1113 (IQHVMIWGSIGAWYVFLALYG). Over 1114-1130 (MLPVKLSGNIFHMLVEI) the chain is Extracellular. The chain crosses the membrane as a helical span at residues 1131 to 1155 (LAPAPIFWLTSLLVIAATTLPYLFH). The Cytoplasmic portion of the chain corresponds to 1156-1240 (ISYQRSVNPL…SNDTPSSNSQ (85 aa)).

It belongs to the cation transport ATPase (P-type) (TC 3.A.3) family. Type IV subfamily.

The protein localises to the cell membrane. Its subcellular location is the endomembrane system. It carries out the reaction ATP + H2O + phospholipidSide 1 = ADP + phosphate + phospholipidSide 2.. Functionally, involved in transport of phospholipids and in regulation of pollen plasma membrane lipid asymmetry. The chain is Phospholipid-transporting ATPase 6 from Arabidopsis thaliana (Mouse-ear cress).